The following is a 126-amino-acid chain: UPF0538 protein C2orf76 homolog (126 aa).

The protein belongs to the UPF0538 family.

The chain is UPF0538 protein C2orf76 homolog from Mus musculus (Mouse).